Consider the following 1616-residue polypeptide: MPKTTKNKNKNTTPKSKTKKYLESANKKSVTKPKKEQDKVENLFDQPFLGEIKKNILKKTKSFNSKKKETVKSKSKSPIDFFDETKRGVFIVPPETDILSRRELNQKTVVNTVPNQTSSYPTINENKLVELNNQPETKVLETKKDSFTTTIREKKLNPEDSQAFWYIFVGDRKYGFWKNHTWVWLGYFDQLQRWNYFKVIETVEVPQEHAAFIKQRPADIDFWRPLVGNPNYGFVQNNTWIWKGFFDKKLNWIPDPVRFTEEALGHTDSLVDEIEKKTISEQPYWEQENDIVVTVFNTKSLASSLENELLLENSSEEQPVIEEVKPRRNEVIFRNPVTKLHFEKEKFEFLNPVKETNETIPLIEIVKEEVKVESEVEAPVEIEPEAACEPETTIPEVETVFVYEDDLKGLDSNQTQAGNVPEVETVFVYEDDLKGLDSIIKDDQQHDEIAKHVEHLSQDYSKEIKDSAKADLSNISDDIDSVWKEFGSFTDETQKSVEEKSQVDEIILDANNDFINESLFRDEVVNNIDSQINETVSEQQFEPTYSVNEFQQEFSEPVVSDEKIKETNSDESVNTDLTALFSEKLVNEVLLTNEYVDVNAPFSTETEVKVSSELPKSELVDEITFINNDPKPQEGLEYKVDFLETEPKSLFDEKTTIVVESEPPFIQPDLSLELDSVNDVDKSLETKTTSVELNHEEIGNEFINLDVSEKEVQEQPTTQLETDSEFVLPTYQIVEDSFTESAETPNEFSSEQKDTLEFISQTQEVETSESNVPTVEQETKLFEHQDENNLFTPLPLDLTEIIESNALFDSKPDEKESSDSELQPTFKEIKLDSTVEVPQESSQVEATFDTVQPEAVFDEIKTQELQPEATTEVVFDDHFQPDVQPEQTPQEAKFDSPVEIPQESSQAEFHAEQISDEIKLEEKTEAVFDHQQLENQSEETVVTPTEVTAFEPETIETQLEPSSEDQPSEPALDQNHPEIVTAEVEQIFDGTKLEDLKLEEANFDNVENNEVQPKETEAEITFDETKELQQETSSEPLSTEELKSEATFDNVSEAESEAVFEKPQLETQTEKILEEEPKSEPVDQLITEASFDTVKHEAVFDKNQTQTEGLEEPQVSSEAEVVDQTTTDTVGEPEAVFDVQPEKTTEVKFDDVENQQKVISEPQVEQQPGEAVFEPSAEAKFDSPVESVQDSQPEPVLEEVQTQPEIQPVESQPEATFDTVQPEQTPQEAKFDSPVETVEQPEFSSEPTQQHVESEASFDEPNYDFDEPNYDFDQPSYDSDLQPSEPQYDVDEPNYDFDEPNYEIESKPSEPQFEPQVEQQPGEAVFEPSAEAKFDSPVESVQDSQPEPLLEEVQTQPEIQPVESQPEATFDTVQPEQTPQEAKFDSPVETIQEPQVSSEPEVVVQPNFEERKPETVLEEPQADEIQPEASEEESLDWELLVGNNSYGHYEPDGEWVWAGFFGDDQKWNKDATVKWARERDYLPLIGDEVYGRYNNKGEWIWYGFYDESGDWVLVDEQWKNRQPRINEAPKFWEKLIGNEEYGYYEDNEWNWYDGEFDSEGNWLVFQSEETENLNEDITKDIPALEGYDIDSIDADEWLSQFSADDAKDVFGSNDKK.

6 disordered regions span residues 1-41, 878-909, 931-975, 1004-1083, 1100-1132, and 1159-1433; these read MPKT…DKVE, HFQP…QAEF, QQLE…LDQN, DNVE…EPVD, FDKN…TVGE, and ISEP…SEEE. Residues 891–1389 are 2 X 26 AA repeats; sequence EAKFDSPVEI…QEAKFDSPVE (499 aa). Over residues 938–952 the composition is skewed to low complexity; the sequence is EETVVTPTEVTAFEP. 2 stretches are compositionally biased toward basic and acidic residues: residues 1012–1029 and 1059–1081; these read QPKE…KELQ and VFEK…KSEP. Repeat copies occupy residues 1161-1186 and 1205-1236. Composition is skewed to polar residues over residues 1200 to 1227 and 1242 to 1251; these read VQTQ…QTPQ and EFSSEPTQQH. A 2 X 32 AA repeats region spans residues 1205–1389; sequence EIQPVESQPE…QEAKFDSPVE (185 aa). A compositionally biased stretch (acidic residues) spans 1256-1270; it reads ASFDEPNYDFDEPNY. A compositionally biased stretch (polar residues) spans 1276–1285; that stretch reads SYDSDLQPSE. Residues 1288-1302 are compositionally biased toward acidic residues; that stretch reads YDVDEPNYDFDEPNY. Residues 1309–1323 show a composition bias toward low complexity; it reads SEPQFEPQVEQQPGE. 2 consecutive repeat copies span residues 1310-1339 and 1358-1389. Positions 1353–1380 are enriched in polar residues; sequence VQTQPEIQPVESQPEATFDTVQPEQTPQ. Residues 1392-1406 are compositionally biased toward low complexity; it reads QEPQVSSEPEVVVQP. Acidic residues predominate over residues 1416 to 1433; it reads VLEEPQADEIQPEASEEE.

Its function is as follows. Could be an accessory structural component in cytadherence. The chain is Protein P200 from Mycoplasma genitalium (strain ATCC 33530 / DSM 19775 / NCTC 10195 / G37) (Mycoplasmoides genitalium).